A 329-amino-acid chain; its full sequence is MPDRVVRVAVTQAEPVWLDLQATIEKTCRLITEAASNNAQLVAFPETWIPGYPCWIWSRLVDFDLNVAYIKNSLRVDSPEMERLQACAREAGIAVSLGFSENSNNSLYISNVLIGSDGEIKVHRRKMKPTHMERTVFGDASGHCLQSVAQLPFGRVGSLSCWEHIQPLLKYNTITQNEEIHVAAWPPLNSEVGDEIPWSMTAEGCKTLSRTYAIESGTFVLHCTAVISESGINSLGTLGGALMSTPGGGHSTIFGPDGRRITDHIEETSEGIVYANLDMDELVVNKMFADCTGHYSRPDLLWLGVSQEIKPVVRPQRAEVDKGTNDQVE.

In terms of domain architecture, CN hydrolase spans V6–M279. E46 serves as the catalytic Proton acceptor. K126 is a catalytic residue. The Nucleophile role is filled by C161.

Belongs to the carbon-nitrogen hydrolase superfamily. Nitrilase family.

The catalysed reaction is a nitrile + 2 H2O = a carboxylate + NH4(+). It carries out the reaction 4-chlorophenylacetonitrile + 2 H2O = 4-chlorophenylacetate + NH4(+). Nitrilase that hydrolyzes preferentially phenylacetonitrile and heteroaromatic nitriles, but has significantly lower activity for (R,S)-mandelonitrile. Also acts on dinitriles like phenylenediacetonitriles (PDAs) 1,2-PDA, 1,3-PDA, and 1,4-PDA, and cyanophenyl acetonitriles (CPAs) 2-CPA and 4-CPA. The protein is Arylacetonitrilase of Hypocrea virens (strain Gv29-8 / FGSC 10586) (Gliocladium virens).